Reading from the N-terminus, the 461-residue chain is MFPLGSVVEVITGERGFVRYAGEVENRKGVYVGLELLPEFAEFGKNRGVVDGREYFKTKNNEKTGIFVPFDKCKLASSISSSPSPKIDGTAASIGMGFPPMSPNLQSSIPRLTNVSSSSNLSMNTISSTALTPTEKILQKRIEDLLYERQNHQQQLEEVLATVDQLQSLVTNFNDQQDEVDELRERITLKEERIQQMRNEASQRRFEFKTTIECLEESSNRAIETYENRIAELEAQLEMYMSGKSEDDLLFSLQQERDYALNQVEILQERVDTLMKQKANSSTANEKLSHMESSSPTLTNASFESPKRGKGSNDLPENHPQRRQTLEFYEIEIEVLREKVEKLQALSDEKDFYISKLEKSLDRNDTTPVPSDEKLSNYAAEKENLVSRISELEHTIEQLTINNERDNERMSPAEFELETTQEVEENDSDSHDDEETWCEVCETNNHSLQECPTVFGSTDEA.

A CAP-Gly domain is found at 22 to 69 (GEVENRKGVYVGLELLPEFAEFGKNRGVVDGREYFKTKNNEKTGIFVP). Phosphoserine occurs at positions 82, 84, 289, 294, and 305. Residues 134 to 418 (TEKILQKRIE…RMSPAEFELE (285 aa)) adopt a coiled-coil conformation. Residues 278 to 303 (KANSSTANEKLSHMESSSPTLTNASF) are compositionally biased toward polar residues. A disordered region spans residues 278–323 (KANSSTANEKLSHMESSSPTLTNASFESPKRGKGSNDLPENHPQRR). Thr-367 is subject to Phosphothreonine. Residues 417–437 (LETTQEVEENDSDSHDDEETW) form a disordered region.

In terms of assembly, monomer. Interacts with tea1 and tea2. Interacts with tea4 in the presence of tea1.

It localises to the cytoplasm. Its subcellular location is the cytoskeleton. In terms of biological role, has a role in stabilizing and targeting the growing tips of the microtubules along the long axis of the cell, directing them to the ends of the cell. Acts as a cargo for tea2. The polypeptide is Tip elongation protein 1 (tip1) (Schizosaccharomyces pombe (strain 972 / ATCC 24843) (Fission yeast)).